Here is a 267-residue protein sequence, read N- to C-terminus: 3-methyl-2-oxobutanoate hydroxymethyltransferase (267 aa).

2 residues coordinate Mg(2+): Asp45 and Asp84. Residues Asp45–Ser46, Asp84, and Lys113 each bind 3-methyl-2-oxobutanoate. Glu115 is a binding site for Mg(2+). The active-site Proton acceptor is the Glu182.

It belongs to the PanB family. In terms of assembly, homodecamer; pentamer of dimers. Mg(2+) is required as a cofactor.

The protein localises to the cytoplasm. The enzyme catalyses 3-methyl-2-oxobutanoate + (6R)-5,10-methylene-5,6,7,8-tetrahydrofolate + H2O = 2-dehydropantoate + (6S)-5,6,7,8-tetrahydrofolate. It functions in the pathway cofactor biosynthesis; coenzyme A biosynthesis. In terms of biological role, catalyzes the reversible reaction in which hydroxymethyl group from 5,10-methylenetetrahydrofolate is transferred onto alpha-ketoisovalerate to form ketopantoate. This Saccharolobus solfataricus (strain ATCC 35092 / DSM 1617 / JCM 11322 / P2) (Sulfolobus solfataricus) protein is 3-methyl-2-oxobutanoate hydroxymethyltransferase.